The chain runs to 1178 residues: DNA-directed RNA polymerase subunit beta' (1178 aa).

4 residues coordinate Zn(2+): C60, C62, C75, and C78. Positions 450, 452, and 454 each coordinate Mg(2+). Zn(2+) is bound by residues C795, C869, C876, and C879.

The protein belongs to the RNA polymerase beta' chain family. The RNAP catalytic core consists of 2 alpha, 1 beta, 1 beta' and 1 omega subunit. When a sigma factor is associated with the core the holoenzyme is formed, which can initiate transcription. Mg(2+) serves as cofactor. The cofactor is Zn(2+).

The enzyme catalyses RNA(n) + a ribonucleoside 5'-triphosphate = RNA(n+1) + diphosphate. DNA-dependent RNA polymerase catalyzes the transcription of DNA into RNA using the four ribonucleoside triphosphates as substrates. This is DNA-directed RNA polymerase subunit beta' from Clostridium perfringens (strain ATCC 13124 / DSM 756 / JCM 1290 / NCIMB 6125 / NCTC 8237 / Type A).